A 236-amino-acid chain; its full sequence is 15,16-dihydrobiliverdin:ferredoxin oxidoreductase (236 aa).

This sequence belongs to the HY2 family.

It catalyses the reaction 15,16-dihydrobiliverdin + oxidized 2[4Fe-4S]-[ferredoxin] = biliverdin IXalpha + reduced 2[4Fe-4S]-[ferredoxin] + 2 H(+). In terms of biological role, catalyzes the two-electron reduction of biliverdin IX-alpha at the C15 methine bridge. This is 15,16-dihydrobiliverdin:ferredoxin oxidoreductase from Prochlorococcus marinus (strain AS9601).